Here is a 220-residue protein sequence, read N- to C-terminus: ATP-dependent Clp protease proteolytic subunit (220 aa).

The active-site Nucleophile is the Ser-125. His-150 is an active-site residue.

The protein belongs to the peptidase S14 family. Fourteen ClpP subunits assemble into 2 heptameric rings which stack back to back to give a disk-like structure with a central cavity, resembling the structure of eukaryotic proteasomes.

The protein resides in the cytoplasm. It carries out the reaction Hydrolysis of proteins to small peptides in the presence of ATP and magnesium. alpha-casein is the usual test substrate. In the absence of ATP, only oligopeptides shorter than five residues are hydrolyzed (such as succinyl-Leu-Tyr-|-NHMec, and Leu-Tyr-Leu-|-Tyr-Trp, in which cleavage of the -Tyr-|-Leu- and -Tyr-|-Trp bonds also occurs).. In terms of biological role, cleaves peptides in various proteins in a process that requires ATP hydrolysis. Has a chymotrypsin-like activity. Plays a major role in the degradation of misfolded proteins. In Bacteroides thetaiotaomicron (strain ATCC 29148 / DSM 2079 / JCM 5827 / CCUG 10774 / NCTC 10582 / VPI-5482 / E50), this protein is ATP-dependent Clp protease proteolytic subunit.